The primary structure comprises 118 residues: Fluoride-specific ion channel FluC 2 (118 aa).

The next 4 helical transmembrane spans lie at 1–21 (MIEA…RFAI), 33–53 (FPIA…YIIG), 55–75 (GVTT…FTTF), and 93–113 (TFLL…FLGM). Residues glycine 70 and threonine 73 each coordinate Na(+).

Belongs to the fluoride channel Fluc/FEX (TC 1.A.43) family.

It localises to the cell membrane. It catalyses the reaction fluoride(in) = fluoride(out). Na(+) is not transported, but it plays an essential structural role and its presence is essential for fluoride channel function. Its function is as follows. Fluoride-specific ion channel. Important for reducing fluoride concentration in the cell, thus reducing its toxicity. The chain is Fluoride-specific ion channel FluC 2 from Bacillus cereus (strain ZK / E33L).